The chain runs to 157 residues: Arginine repressor (157 aa).

Belongs to the ArgR family.

It localises to the cytoplasm. Its pathway is amino-acid biosynthesis; L-arginine biosynthesis [regulation]. Functionally, regulates arginine biosynthesis genes. The chain is Arginine repressor from Lactobacillus delbrueckii subsp. bulgaricus (strain ATCC 11842 / DSM 20081 / BCRC 10696 / JCM 1002 / NBRC 13953 / NCIMB 11778 / NCTC 12712 / WDCM 00102 / Lb 14).